A 405-amino-acid chain; its full sequence is Arginine biosynthesis bifunctional protein ArgJ, mitochondrial (405 aa).

Residues threonine 174, lysine 200, threonine 211, and glutamate 300 each coordinate substrate. Threonine 211 functions as the Nucleophile in the catalytic mechanism.

It belongs to the ArgJ family. In terms of assembly, heterodimer of an alpha and a beta chain. In terms of processing, the alpha and beta chains are autoproteolytically processed from a single precursor protein within the mitochondrion.

Its subcellular location is the mitochondrion matrix. The enzyme catalyses N(2)-acetyl-L-ornithine + L-glutamate = N-acetyl-L-glutamate + L-ornithine. The catalysed reaction is L-glutamate + acetyl-CoA = N-acetyl-L-glutamate + CoA + H(+). It participates in amino-acid biosynthesis; L-arginine biosynthesis; L-ornithine and N-acetyl-L-glutamate from L-glutamate and N(2)-acetyl-L-ornithine (cyclic): step 1/1. The protein operates within amino-acid biosynthesis; L-arginine biosynthesis; N(2)-acetyl-L-ornithine from L-glutamate: step 1/4. Functionally, catalyzes two activities which are involved in the cyclic version of arginine biosynthesis: the synthesis of acetylglutamate from glutamate and acetyl-CoA, and of ornithine by transacetylation between acetylornithine and glutamate. In Candida tropicalis (strain ATCC MYA-3404 / T1) (Yeast), this protein is Arginine biosynthesis bifunctional protein ArgJ, mitochondrial.